Here is a 384-residue protein sequence, read N- to C-terminus: DNA dC-&gt;dU-editing enzyme APOBEC-3G (384 aa).

Positions 1 to 60 are essential for cytoplasmic localization; the sequence is MKPHFRNPVERMYQDTFSDNFYNRPILSRRNTVWLCYEVKTKGPSRPPLDAKIFRGQVYS. CMP/dCMP-type deaminase domains follow at residues 29 to 138 and 214 to 328; these read RRNT…LRSL and GRHE…LRTL. At threonine 32 the chain carries Phosphothreonine; by PKA. The Zn(2+) site is built by histidine 65, cysteine 97, and cysteine 100. Residues 209–336 are necessary for homooligomerization; sequence ELWVRGRHET…TLAKAGAEIS (128 aa). An interaction with DNA region spans residues 213–215; sequence RGR. Threonine 218 is modified (phosphothreonine; by PKA and CAMK2). Residue histidine 257 coordinates Zn(2+). The active-site Proton donor is glutamate 259. Positions 288 and 291 each coordinate Zn(2+). Positions 313–320 are interaction with DNA; the sequence is RIYDDQGR.

The protein belongs to the cytidine and deoxycytidylate deaminase family. Homodimer. Homooligomer. Can bind RNA to form ribonucleoprotein complexes of high-molecular-mass (HMM) or low-molecular-mass (LMM). HMM is inactive and heterogeneous in protein composition because of binding nonselectively to cellular RNAs, which in turn are associated with variety of cellular proteins. The LMM form which is enzymatically active has few or no RNAs associated. Its ability to form homooligomer is distinct from its ability to assemble into HMM. Interacts with APOBEC3B, APOBEC3F, MOV10, AGO2, EIF4E, EIF4ENIF1, DCP2 and DDX6 in an RNA-dependent manner. Interacts with AGO1, AGO3 and PKA/PRKACA. It depends on Zn(2+) as a cofactor.

It localises to the cytoplasm. The protein localises to the nucleus. Its subcellular location is the P-body. It carries out the reaction a 2'-deoxycytidine in single-stranded DNA + H2O + H(+) = a 2'-deoxyuridine in single-stranded DNA + NH4(+). In terms of biological role, DNA deaminase (cytidine deaminase) which acts as an inhibitor of retrovirus replication and retrotransposon mobility via deaminase-dependent and -independent mechanisms. After the penetration of retroviral nucleocapsids into target cells of infection and the initiation of reverse transcription, it can induce the conversion of cytosine to uracil in the minus-sense single-strand viral DNA, leading to G-to-A hypermutations in the subsequent plus-strand viral DNA. The resultant detrimental levels of mutations in the proviral genome, along with a deamination-independent mechanism that works prior to the proviral integration, together exert efficient antiretroviral effects in infected target cells. Selectively targets single-stranded DNA and does not deaminate double-stranded DNA or single- or double-stranded RNA. May inhibit the mobility of LTR retrotransposons. The polypeptide is DNA dC-&gt;dU-editing enzyme APOBEC-3G (APOBEC3G) (Pan paniscus (Pygmy chimpanzee)).